The chain runs to 162 residues: Phosphopantetheine adenylyltransferase (162 aa).

A substrate-binding site is contributed by Ser-9. ATP is bound by residues 9–10 (SF) and His-17. 3 residues coordinate substrate: Lys-41, Leu-73, and Lys-87. ATP contacts are provided by residues 88 to 90 (GLR), Glu-98, and 123 to 129 (CSFLSSS).

Belongs to the bacterial CoaD family. As to quaternary structure, homohexamer. Mg(2+) serves as cofactor.

Its subcellular location is the cytoplasm. It carries out the reaction (R)-4'-phosphopantetheine + ATP + H(+) = 3'-dephospho-CoA + diphosphate. Its pathway is cofactor biosynthesis; coenzyme A biosynthesis; CoA from (R)-pantothenate: step 4/5. In terms of biological role, reversibly transfers an adenylyl group from ATP to 4'-phosphopantetheine, yielding dephospho-CoA (dPCoA) and pyrophosphate. This Natranaerobius thermophilus (strain ATCC BAA-1301 / DSM 18059 / JW/NM-WN-LF) protein is Phosphopantetheine adenylyltransferase.